Here is a 409-residue protein sequence, read N- to C-terminus: 5-aminolevulinate synthase (409 aa).

Residues R21, S137, and K156 each contribute to the substrate site. Pyridoxal 5'-phosphate is bound by residues S189, H217, and T245. Residue K248 is part of the active site. N6-(pyridoxal phosphate)lysine is present on K248. Residues T277 and T278 each coordinate pyridoxal 5'-phosphate. T365 contributes to the substrate binding site.

This sequence belongs to the class-II pyridoxal-phosphate-dependent aminotransferase family. Homodimer. Pyridoxal 5'-phosphate serves as cofactor.

The enzyme catalyses succinyl-CoA + glycine + H(+) = 5-aminolevulinate + CO2 + CoA. The protein operates within porphyrin-containing compound metabolism; protoporphyrin-IX biosynthesis; 5-aminolevulinate from glycine: step 1/1. In Paracoccus denitrificans (strain Pd 1222), this protein is 5-aminolevulinate synthase (hemA).